The following is a 322-amino-acid chain: Malate dehydrogenase (322 aa).

NAD(+) is bound by residues 10–15 (GSGQIG) and Asp-34. The substrate site is built by Arg-83 and Arg-89. NAD(+) contacts are provided by residues Asn-96 and 119–121 (ITN). Asn-121 and Arg-152 together coordinate substrate. His-176 serves as the catalytic Proton acceptor.

It belongs to the LDH/MDH superfamily. MDH type 3 family.

The catalysed reaction is (S)-malate + NAD(+) = oxaloacetate + NADH + H(+). Catalyzes the reversible oxidation of malate to oxaloacetate. This is Malate dehydrogenase from Nitrobacter winogradskyi (strain ATCC 25391 / DSM 10237 / CIP 104748 / NCIMB 11846 / Nb-255).